An 88-amino-acid chain; its full sequence is Sec-independent protein translocase protein TatA (88 aa).

Residues 1 to 21 (MGGASIWHWIVVGVIVMLLFG) form a helical membrane-spanning segment. Positions 62–88 (TEPVRTLPPHPTEPAPATHATVDRKVV) are disordered.

Belongs to the TatA/E family. The Tat system comprises two distinct complexes: a TatABC complex, containing multiple copies of TatA, TatB and TatC subunits, and a separate TatA complex, containing only TatA subunits. Substrates initially bind to the TatABC complex, which probably triggers association of the separate TatA complex to form the active translocon.

The protein localises to the cell inner membrane. Its function is as follows. Part of the twin-arginine translocation (Tat) system that transports large folded proteins containing a characteristic twin-arginine motif in their signal peptide across membranes. TatA could form the protein-conducting channel of the Tat system. In Methylobacterium sp. (strain 4-46), this protein is Sec-independent protein translocase protein TatA.